A 321-amino-acid polypeptide reads, in one-letter code: Arabinan endo-1,5-alpha-L-arabinosidase A (321 aa).

The first 19 residues, Met-1 to Gly-19, serve as a signal peptide directing secretion. Asp-34 serves as the catalytic Proton acceptor. A glycan (N-linked (GlcNAc...) asparagine) is linked at Asn-192. Glu-200 acts as the Proton donor in catalysis.

This sequence belongs to the glycosyl hydrolase 43 family.

It is found in the secreted. It catalyses the reaction Endohydrolysis of (1-&gt;5)-alpha-arabinofuranosidic linkages in (1-&gt;5)-arabinans.. Its pathway is glycan metabolism; L-arabinan degradation. Functionally, endo-1,5-alpha-L-arabinanase involved in degradation of pectin. Its preferred substrate is linear 1,5-alpha-L-arabinan. This chain is Arabinan endo-1,5-alpha-L-arabinosidase A (abnA), found in Aspergillus aculeatus.